The sequence spans 432 residues: Enolase (432 aa).

Gln167 is a (2R)-2-phosphoglycerate binding site. Catalysis depends on Glu209, which acts as the Proton donor. Residues Asp246, Glu290, and Asp317 each coordinate Mg(2+). Residues Lys342, Arg371, Ser372, and Lys393 each contribute to the (2R)-2-phosphoglycerate site. Lys342 serves as the catalytic Proton acceptor.

It belongs to the enolase family. As to quaternary structure, component of the RNA degradosome, a multiprotein complex involved in RNA processing and mRNA degradation. Requires Mg(2+) as cofactor.

It is found in the cytoplasm. The protein resides in the secreted. The protein localises to the cell surface. It catalyses the reaction (2R)-2-phosphoglycerate = phosphoenolpyruvate + H2O. It participates in carbohydrate degradation; glycolysis; pyruvate from D-glyceraldehyde 3-phosphate: step 4/5. In terms of biological role, catalyzes the reversible conversion of 2-phosphoglycerate (2-PG) into phosphoenolpyruvate (PEP). It is essential for the degradation of carbohydrates via glycolysis. The protein is Enolase of Cronobacter sakazakii (strain ATCC BAA-894) (Enterobacter sakazakii).